The sequence spans 506 residues: 2-isopropylmalate synthase (506 aa).

The Pyruvate carboxyltransferase domain maps to 4-266 (ILFMDTTLRD…EPSMTLKEIK (263 aa)). Residues aspartate 13, histidine 201, histidine 203, and asparagine 237 each contribute to the Mn(2+) site. The interval 390–506 (NITQLQVHFV…KLKSFIQLVK (117 aa)) is regulatory domain.

Belongs to the alpha-IPM synthase/homocitrate synthase family. LeuA type 1 subfamily. In terms of assembly, homodimer. Requires Mn(2+) as cofactor.

The protein resides in the cytoplasm. It carries out the reaction 3-methyl-2-oxobutanoate + acetyl-CoA + H2O = (2S)-2-isopropylmalate + CoA + H(+). The protein operates within amino-acid biosynthesis; L-leucine biosynthesis; L-leucine from 3-methyl-2-oxobutanoate: step 1/4. Catalyzes the condensation of the acetyl group of acetyl-CoA with 3-methyl-2-oxobutanoate (2-ketoisovalerate) to form 3-carboxy-3-hydroxy-4-methylpentanoate (2-isopropylmalate). The sequence is that of 2-isopropylmalate synthase from Bacillus cereus (strain ZK / E33L).